A 391-amino-acid polypeptide reads, in one-letter code: Septation protein etd1 (391 aa).

Positions 49 to 68 are disordered; the sequence is MKSYGSDITPRRPKQLGLPK.

In terms of biological role, involved in septation. In Schizosaccharomyces pombe (strain 972 / ATCC 24843) (Fission yeast), this protein is Septation protein etd1 (etd1).